Consider the following 817-residue polypeptide: DNA gyrase subunit A (817 aa).

In terms of domain architecture, Topo IIA-type catalytic spans 39–505 (LPDARDGLKP…AVEDVSIEDL (467 aa)). Tyrosine 127 functions as the O-(5'-phospho-DNA)-tyrosine intermediate in the catalytic mechanism. Residues 532-538 (QGRGGKG) carry the GyrA-box motif.

This sequence belongs to the type II topoisomerase GyrA/ParC subunit family. In terms of assembly, heterotetramer, composed of two GyrA and two GyrB chains. In the heterotetramer, GyrA contains the active site tyrosine that forms a transient covalent intermediate with DNA, while GyrB binds cofactors and catalyzes ATP hydrolysis.

It is found in the cytoplasm. It catalyses the reaction ATP-dependent breakage, passage and rejoining of double-stranded DNA.. In terms of biological role, a type II topoisomerase that negatively supercoils closed circular double-stranded (ds) DNA in an ATP-dependent manner to modulate DNA topology and maintain chromosomes in an underwound state. Negative supercoiling favors strand separation, and DNA replication, transcription, recombination and repair, all of which involve strand separation. Also able to catalyze the interconversion of other topological isomers of dsDNA rings, including catenanes and knotted rings. Type II topoisomerases break and join 2 DNA strands simultaneously in an ATP-dependent manner. The polypeptide is DNA gyrase subunit A (Aminobacterium colombiense (strain DSM 12261 / ALA-1)).